The sequence spans 176 residues: Beta-carotene hydroxylase (176 aa).

The Fatty acid hydroxylase domain maps to 10–126 (LSVIAMEGIA…AHRLHHAVRG (117 aa)). Residues 152–176 (HGRPPKRDAAKDRPDAASPSSSSPE) are disordered. Positions 156 to 166 (PKRDAAKDRPD) are enriched in basic and acidic residues. The span at 167-176 (AASPSSSSPE) shows a compositional bias: low complexity.

It belongs to the sterol desaturase family.

The protein operates within carotenoid biosynthesis; zeaxanthin biosynthesis. In terms of biological role, catalyzes the hydroxylation reaction from beta-carotene to zeaxanthin. The chain is Beta-carotene hydroxylase (crtZ) from Pseudescherichia vulneris (Escherichia vulneris).